A 245-amino-acid chain; its full sequence is MDKTRTFLDVKEYPDTEVQKNRVLTLEEWQEKWVSRRIGFHQEQGHKLLKKHLDTFLKGENGLRVFFPLCGKAVEMKWFADRGHSVVGVEISELGIREFFAEQNLSYTEEPIVEIPGGKIFKSSSGNISLYCCSLFDLPRANIGKFDRIWDRGALVAINPGDRERYADIMLSLTRKGFHYLLAVLCYDPTKHAGPPFYVPEAEIKKLFGSICNIHCLEKVDVFEEQHKSWGIDYIIEKLYLFTEK.

29-40 (WQEKWVSRRIGF) contributes to the S-adenosyl-L-methionine binding site. F40 lines the substrate pocket. K58 carries the post-translational modification N6-acetyllysine. S-adenosyl-L-methionine-binding residues include L69, E90, and R152.

It belongs to the class I-like SAM-binding methyltransferase superfamily. TPMT family. In terms of assembly, monomer.

It localises to the cytoplasm. It catalyses the reaction S-adenosyl-L-methionine + a thiopurine = S-adenosyl-L-homocysteine + a thiopurine S-methylether.. In Canis lupus familiaris (Dog), this protein is Thiopurine S-methyltransferase (TPMT).